The chain runs to 595 residues: Chaperone protein HscA homolog (595 aa).

The protein belongs to the heat shock protein 70 family.

In terms of biological role, chaperone involved in the maturation of iron-sulfur cluster-containing proteins. Has a low intrinsic ATPase activity which is markedly stimulated by HscB. This chain is Chaperone protein HscA homolog, found in Rickettsia conorii (strain ATCC VR-613 / Malish 7).